Here is a 363-residue protein sequence, read N- to C-terminus: Histidinol-phosphate aminotransferase (363 aa).

K227 is subject to N6-(pyridoxal phosphate)lysine.

The protein belongs to the class-II pyridoxal-phosphate-dependent aminotransferase family. Histidinol-phosphate aminotransferase subfamily. As to quaternary structure, homodimer. The cofactor is pyridoxal 5'-phosphate.

It catalyses the reaction L-histidinol phosphate + 2-oxoglutarate = 3-(imidazol-4-yl)-2-oxopropyl phosphate + L-glutamate. It participates in amino-acid biosynthesis; L-histidine biosynthesis; L-histidine from 5-phospho-alpha-D-ribose 1-diphosphate: step 7/9. The sequence is that of Histidinol-phosphate aminotransferase from Akkermansia muciniphila (strain ATCC BAA-835 / DSM 22959 / JCM 33894 / BCRC 81048 / CCUG 64013 / CIP 107961 / Muc).